A 461-amino-acid polypeptide reads, in one-letter code: Decaprenylphosphoryl-beta-D-ribose oxidase (461 aa).

Residues 19–194 (TAPSVANVLR…MRATIEMTPT (176 aa)) form the FAD-binding PCMH-type domain. FAD is bound by residues 53 to 63 (ARGLGRSYGDN), Gly-117, 122 to 125 (TVGG), 129 to 132 (CDIH), Ile-184, and Tyr-415.

This sequence belongs to the DprE1 family. Monomer. Although forming apparent dimer in crystals, DprE1 does not dimerize appreciably in solution. Interacts with DprE2 to form an epimerase complex.

The protein localises to the periplasm. The enzyme catalyses trans,octa-cis-decaprenylphospho-beta-D-ribofuranose + FAD + H(+) = trans,octa-cis-decaprenylphospho-beta-D-erythro-pentofuranosid-2-ulose + FADH2. The protein operates within cell wall biogenesis; cell wall polysaccharide biosynthesis. Is inhibited by 8-nitro-benzothiazinones (BTZs) such as BTZ043 and PBTZ169; BTZs are a new class of antimycobacterial agents that kill M.tuberculosis in vitro, ex vivo, and in mouse models of tuberculosis. Is also inhibited by dinitrobenzamide derivatives (DNBs), which thus block formation of both cell-wall lipoarabinomannan and arabinogalactan via inhibition of decaprenyl-phospho-arabinose (DPA) synthesis; DNBs show high activity against intracellular growth of M.tuberculosis inside macrophages, including extensively drug resistant (XDR) strains. BTZs and DNBs are suicide inhibitors that act via covalent modification of DprE1; the essential nitro group of these compounds is reduced by DprE1 to a nitroso group, which then specifically reacts with Cys-387 of DprE1 to form an irreversible semimercaptal adduct. Many other compounds with diverse scaffolds were found to act as either covalent (e.g. nitroquinoxalines, nitroimidazoles) or non-covalent (e.g. the benzothiazole derivative TCA1, the 2-carboxyquinoxaline Ty38C, 8-pyrrole-benzothiazinones, 1,4-azaindoles, pyrazolopyridones, 4-aminoquinolone piperidine amides) DprE1 inhibitors. In terms of biological role, component of the DprE1-DprE2 complex that catalyzes the 2-step epimerization of decaprenyl-phospho-ribose (DPR) to decaprenyl-phospho-arabinose (DPA), a key precursor that serves as the arabinose donor required for the synthesis of cell-wall arabinans. DprE1 catalyzes the first step of epimerization, namely FAD-dependent oxidation of the C2' hydroxyl of DPR to yield the keto intermediate decaprenyl-phospho-2'-keto-D-arabinose (DPX). The intermediate DPX is then transferred to DprE2 subunit of the epimerase complex, most probably through a 'substrate channel' at the interface of DprE1-DprE2 complex. Can also use farnesyl-phosphoryl-beta-D-ribofuranose (FPR) as substrate in vitro. DprE1 is a highly vulnerable and fully validated tuberculosis drug target. The chain is Decaprenylphosphoryl-beta-D-ribose oxidase from Mycobacterium tuberculosis (strain CDC 1551 / Oshkosh).